The following is an 89-amino-acid chain: Small ribosomal subunit protein uS17 (89 aa).

It belongs to the universal ribosomal protein uS17 family. Part of the 30S ribosomal subunit.

In terms of biological role, one of the primary rRNA binding proteins, it binds specifically to the 5'-end of 16S ribosomal RNA. The protein is Small ribosomal subunit protein uS17 of Variovorax paradoxus (strain S110).